A 213-amino-acid chain; its full sequence is Putative glutathione-dependent formaldehyde-activating enzyme (213 aa).

The 147-residue stretch at 19–165 (FPGGTLKCLC…FRELGLETYD (147 aa)) folds into the CENP-V/GFA domain. Positions 26, 28, 47, 49, 52, 94, and 97 each coordinate Zn(2+).

It belongs to the Gfa family. It depends on Zn(2+) as a cofactor.

It carries out the reaction S-(hydroxymethyl)glutathione = glutathione + formaldehyde. It participates in one-carbon metabolism; formaldehyde degradation; formate from formaldehyde (glutathione route): step 1/3. Its function is as follows. Catalyzes the condensation of formaldehyde and glutathione to S-hydroxymethylglutathione. This Podospora anserina (strain S / ATCC MYA-4624 / DSM 980 / FGSC 10383) (Pleurage anserina) protein is Putative glutathione-dependent formaldehyde-activating enzyme.